Here is a 693-residue protein sequence, read N- to C-terminus: Protein-glutamine gamma-glutamyltransferase E (693 aa).

Residue Tyr-111 is modified to Phosphotyrosine. Thr-112 bears the Phosphothreonine mark. Ca(2+)-binding residues include Ala-222, Asn-225, Asn-227, Asp-228, and Asn-230. The active site involves Cys-273. Residues Asp-302, Asp-304, Asn-306, Ser-308, and Asp-325 each coordinate Ca(2+). Catalysis depends on residues His-331 and Asp-354. 4 residues coordinate Ca(2+): Asn-394, Thr-416, Glu-444, and Glu-449. The tract at residues 457–483 (LDKLKPNASFGATSSRNPEGEDKEPSI) is disordered.

Belongs to the transglutaminase superfamily. Transglutaminase family. In terms of assembly, consists of two polypeptide chains, which are synthesized as a precursor form of a single polypeptide. The cofactor is Ca(2+). Post-translationally, activated by proteolytic processing. In vitro activation is commonly achieved by cleavage with dispase, a neutral bacterial protease. Physiological activation may be catalyzed by CTSL and, to a lesser extent, by CTSS. Expressed in skin and stomach and, at lower levels, in testis, kidney and spleen (at protein level). On the basis of its catalytic activity, detected in the epidermis, around the granular and spinous layers but not in the outermost cornified layers. In hair follicles, mainly located in the medulla and the hair cortex.

It localises to the cytoplasm. It carries out the reaction L-glutaminyl-[protein] + L-lysyl-[protein] = [protein]-L-lysyl-N(6)-5-L-glutamyl-[protein] + NH4(+). Its function is as follows. Catalyzes the calcium-dependent formation of isopeptide cross-links between glutamine and lysine residues in various proteins, as well as the conjugation of polyamines to proteins. Involved in the formation of the cornified envelope (CE), a specialized component consisting of covalent cross-links of proteins beneath the plasma membrane of terminally differentiated keratinocytes. Catalyzes small proline-rich proteins (SPRR1 and SPRR2) and LOR cross-linking to form small interchain oligomers, which are further cross-linked by TGM1 onto the growing CE scaffold. In hair follicles, involved in cross-linking structural proteins to hardening the inner root sheath. The polypeptide is Protein-glutamine gamma-glutamyltransferase E (Tgm3) (Mus musculus (Mouse)).